We begin with the raw amino-acid sequence, 103 residues long: Small ribosomal subunit protein uS10 (103 aa).

This sequence belongs to the universal ribosomal protein uS10 family. As to quaternary structure, part of the 30S ribosomal subunit.

In terms of biological role, involved in the binding of tRNA to the ribosomes. This chain is Small ribosomal subunit protein uS10, found in Stenotrophomonas maltophilia (strain R551-3).